A 221-amino-acid polypeptide reads, in one-letter code: CASP-like protein 4C1 (221 aa).

The disordered stretch occupies residues methionine 1 to histidine 21. Residues methionine 1–threonine 54 are Cytoplasmic-facing. Residues alanine 55–alanine 75 traverse the membrane as a helical segment. The Extracellular segment spans residues threonine 76–tyrosine 101. A helical membrane pass occupies residues valine 102–tryptophan 122. The Cytoplasmic portion of the chain corresponds to tyrosine 123–aspartate 144. The chain crosses the membrane as a helical span at residues glutamine 145–leucine 165. Residues arginine 166–glutamate 189 are Extracellular-facing. The chain crosses the membrane as a helical span at residues isoleucine 190–glycine 210. Topologically, residues tyrosine 211–proline 221 are cytoplasmic.

The protein belongs to the Casparian strip membrane proteins (CASP) family. Homodimer and heterodimers.

The protein localises to the cell membrane. This chain is CASP-like protein 4C1, found in Pteridium aquilinum subsp. aquilinum (Bracken fern).